We begin with the raw amino-acid sequence, 252 residues long: MSRTPIIAGNWKLHMNPEQTTEFVDAVKGKLPDPSKVESLICAPAVDLDALRKAAEGSNLHIGAENCYFEDEGAYTGETSPKVLKEMGIDYVIIGHSERRGYFHETDEDINKKAKAIFANGMKPIICCGESLETREANKQEDWVVAQIKAALDGLTAEQVSSLVIAYEPIWAIGTGKTASSDQAEEMCKTIRETVKDLYNEETAENVRIQYGGSVKPANVKELMSKPDIDGGLVGGASLDPESFLALVNYQD.

10–12 provides a ligand contact to substrate; sequence NWK. His-96 acts as the Electrophile in catalysis. Glu-168 acts as the Proton acceptor in catalysis. Substrate contacts are provided by residues Gly-174, Ser-214, and 235–236; that span reads GG.

Belongs to the triosephosphate isomerase family. In terms of assembly, homodimer.

The protein localises to the cytoplasm. It carries out the reaction D-glyceraldehyde 3-phosphate = dihydroxyacetone phosphate. Its pathway is carbohydrate biosynthesis; gluconeogenesis. It functions in the pathway carbohydrate degradation; glycolysis; D-glyceraldehyde 3-phosphate from glycerone phosphate: step 1/1. In terms of biological role, involved in the gluconeogenesis. Catalyzes stereospecifically the conversion of dihydroxyacetone phosphate (DHAP) to D-glyceraldehyde-3-phosphate (G3P). The sequence is that of Triosephosphate isomerase from Lactobacillus acidophilus (strain ATCC 700396 / NCK56 / N2 / NCFM).